The chain runs to 436 residues: MLSPFEQFLRRATAGGIVLIAATILTLILSNSTWHTAYHAFWEQHLSLRWGNWIFDQSLHHWINDGLMAVFFFVVGLELKREFLVGELSSLRDAALPVIAALGGMLAPALIYHQFNPTGPAADGWGIPMATDIAFAIGILVLLAWRIPRNLIIFLTALAIADDLGAVLVIAIFYTPALHIKALMIAALLLLALLLFNRSGVRHTLPYLLVGLPFWYFVILSGIHATVAGIFLAFTIPARGRILPDELADNLSAHGQHLRDTITHSKRLNPLVNGQLAGIIQDIRNLSVAALAPQQRLEHAIQPWVTFAVLPVFALANAGINFAHISVNMLFSSVTIGTCLGLVLGKFLGIGLSSWLAVRLKIARLPAGVRWRHLLGAAWLGGIGFTMSLFIGQLAFGDPRLREEAKLGILLASLIAASIGLLWLFQVSRKKGDVPA.

A run of 11 helical transmembrane segments spans residues 14-34 (AGGI…NSTW), 59-79 (LHHW…GLEL), 95-115 (ALPV…YHQF), 125-145 (WGIP…LLAW), 152-172 (IIFL…VIAI), 176-196 (PALH…LLLF), 214-234 (FWYF…FLAF), 300-320 (AIQP…NAGI), 336-356 (IGTC…SSWL), 374-394 (LLGA…IGQL), and 407-427 (LGIL…LFQV).

The protein belongs to the NhaA Na(+)/H(+) (TC 2.A.33) antiporter family.

The protein resides in the cell inner membrane. The catalysed reaction is Na(+)(in) + 2 H(+)(out) = Na(+)(out) + 2 H(+)(in). Its function is as follows. Na(+)/H(+) antiporter that extrudes sodium in exchange for external protons. The sequence is that of Na(+)/H(+) antiporter NhaA from Acidithiobacillus ferrooxidans (strain ATCC 23270 / DSM 14882 / CIP 104768 / NCIMB 8455) (Ferrobacillus ferrooxidans (strain ATCC 23270)).